The primary structure comprises 442 residues: Histidine--tRNA ligase (442 aa).

It belongs to the class-II aminoacyl-tRNA synthetase family. Homodimer.

Its subcellular location is the cytoplasm. It carries out the reaction tRNA(His) + L-histidine + ATP = L-histidyl-tRNA(His) + AMP + diphosphate + H(+). This is Histidine--tRNA ligase (hisS) from Helicobacter pylori (strain ATCC 700392 / 26695) (Campylobacter pylori).